Here is a 363-residue protein sequence, read N- to C-terminus: Pyrimidine monooxygenase RutA (363 aa).

Residues 49–50, Asn-115, Glu-124, 140–141, and Ser-190 contribute to the FMN site; these read IK and RY.

It belongs to the NtaA/SnaA/DszA monooxygenase family. RutA subfamily.

It catalyses the reaction uracil + FMNH2 + NADH + O2 = (Z)-3-ureidoacrylate + FMN + NAD(+) + H2O + H(+). It carries out the reaction thymine + FMNH2 + NADH + O2 = (Z)-2-methylureidoacrylate + FMN + NAD(+) + H2O + H(+). In terms of biological role, catalyzes the pyrimidine ring opening between N-3 and C-4 by an unusual flavin hydroperoxide-catalyzed mechanism, adding oxygen atoms in the process to yield ureidoacrylate peracid, that immediately reacts with FMN forming ureidoacrylate and FMN-N(5)-oxide. The FMN-N(5)-oxide reacts spontaneously with NADH to produce FMN. Requires the flavin reductase RutF to regenerate FMN in vivo. The sequence is that of Pyrimidine monooxygenase RutA from Klebsiella pneumoniae subsp. pneumoniae (strain ATCC 700721 / MGH 78578).